A 238-amino-acid polypeptide reads, in one-letter code: MPPHLIDGEPHDHAHDRPKRQRTPGEPLRIGIGGPVGSGKTALVAALCKQLREELSLAVLTNDIYTTEDADFLRRHAVLPDERITAVQTGGCPHTAIRDDITANLDAIDDLIAANPPLDLILVESGGDNLTATFSSGLIDVQIFVIDVAGGDKVPRKGGPGVTYSDLLVVNKTDLAPLVGADLGVMERDAAKVRQGRPTALISLTDDPAATPVLAWVREQLAAIAEADRHGAASGIAH.

Residues 1–15 (MPPHLIDGEPHDHAH) show a composition bias toward basic and acidic residues. A disordered region spans residues 1 to 27 (MPPHLIDGEPHDHAHDRPKRQRTPGEP). GTP is bound at residue 34–41 (GPVGSGKT).

It belongs to the SIMIBI class G3E GTPase family. UreG subfamily. In terms of assembly, homodimer. UreD, UreF and UreG form a complex that acts as a GTP-hydrolysis-dependent molecular chaperone, activating the urease apoprotein by helping to assemble the nickel containing metallocenter of UreC. The UreE protein probably delivers the nickel.

Its subcellular location is the cytoplasm. Its function is as follows. Facilitates the functional incorporation of the urease nickel metallocenter. This process requires GTP hydrolysis, probably effectuated by UreG. This is Urease accessory protein UreG from Nocardia farcinica (strain IFM 10152).